The following is a 316-amino-acid chain: Haloacid dehalogenase-like hydrolase domain-containing protein At4g39970 (316 aa).

The transit peptide at Met-1–Tyr-46 directs the protein to the chloroplast. The active-site Nucleophile is the Asp-69. Mg(2+)-binding residues include Asp-69, Asp-71, and Asp-259. Asp-71 functions as the Proton donor in the catalytic mechanism.

It belongs to the HAD-like hydrolase superfamily. DOG/GPP family. Mg(2+) is required as a cofactor.

The protein resides in the plastid. It localises to the chloroplast. This is Haloacid dehalogenase-like hydrolase domain-containing protein At4g39970 from Arabidopsis thaliana (Mouse-ear cress).